A 685-amino-acid chain; its full sequence is MPVCGCLSVVLSHAVVLLMLVLHSASGHPQTFPCRLIQRVALCSGRQLSVIPDCLPHETEEIFFDRNLLENLQDGLSRYPFLRMFSCANNQLMTVAETAFIESHLLENLNLANNELHHGHKQVAQAFRSLTQLKTLDLSGNGLSEDMVSVLVANLSSLESLYLSRNGMQRLDESTFRDLHQLKELNVERNLLFEISGAFDHMKKLQRLNLAFNCLPCLVNFEMTQLLVLNASHNSIEWFITNQNLTETFQLETLDLSDNHLLFFPFLPTNNQIRTLLLSNNRVGFYQHLANSTSSNWTTSVDYYNLGQNISNITMDLWNENLHGNLSSVEFLDLSENKVNYFPQGFIKQMPQLYWLKLRSNCLQSFSLTSEDLPVTIYELDVSRNRLTEIKASQTSKNKLNNLTHLNLSTNDLQNFPPMIFTSLPNLNTLDLSHNTVDVCYSSNYMGLSGCVEWSSMASLKQLYLADCSIQNVPSSAFKGTSLTHLELSNNPNLHLKQQSLKGLANTLQHLGIGNTGLQDFDFSPYTNLKSLNISRNSLSKLPDSLMALNLKLLDLRDNSLTTIKSEHASLLAKKLQTVYMNGNAFNCCHLDWFRTFGENKGIHVADLSEITCLDLNYRRHKVVLTDAVYCGFTNNNKESVVWYILLFVTVSVSIMGISVIYMLTFKPRMLPRVIKKKCWRPTSY.

The signal sequence occupies residues 1-27 (MPVCGCLSVVLSHAVVLLMLVLHSASG). At 28 to 640 (HPQTFPCRLI…CGFTNNNKES (613 aa)) the chain is on the extracellular side. One can recognise an LRRNT domain in the interval 29 to 56 (PQTFPCRLIQRVALCSGRQLSVIPDCLP). LRR repeat units lie at residues 57-79 (HETE…LSRY), 80-102 (PFLR…AFIE), 103-129 (SHLL…AFRS), 130-154 (LTQL…LVAN), 155-178 (LSSL…TFRD), 180-201 (HQLK…AFDH), and 202-225 (MKKL…EMTQ). N154 is a glycosylation site (N-linked (GlcNAc...) asparagine). 2 N-linked (GlcNAc...) asparagine glycosylation sites follow: N230 and N244. LRR repeat units follow at residues 248 to 271 (TFQL…PTNN) and 273 to 296 (IRTL…TSSN). 5 N-linked (GlcNAc...) asparagine glycosylation sites follow: N291, N296, N309, N312, and N325. 11 LRR repeats span residues 326–349 (LSSV…FIKQ), 351–373 (PQLY…SEDL), 374–397 (PVTI…QTSK), 400–423 (LNNL…IFTS), 425–447 (PNLN…NYMG), 457–480 (MASL…AFKG), 482–503 (SLTH…SLKG), 505–526 (ANTL…FSPY), 527–549 (TNLK…LMAL), 551–571 (LKLL…HASL), and 573–596 (AKKL…WFRT). Residues N402 and N407 are each glycosylated (N-linked (GlcNAc...) asparagine). N533 carries N-linked (GlcNAc...) asparagine glycosylation. Residues 597 to 635 (FGENKGIHVADLSEITCLDLNYRRHKVVLTDAVYCGFTN) form the LRRCT domain. A helical membrane pass occupies residues 641–661 (VVWYILLFVTVSVSIMGISVI). Topologically, residues 662-685 (YMLTFKPRMLPRVIKKKCWRPTSY) are cytoplasmic.

It belongs to the LRRC32/LRRC33 family.

Its subcellular location is the cell membrane. The protein localises to the endoplasmic reticulum membrane. Its function is as follows. Key regulator of transforming growth factor beta-1 (TGFB1) specifically required for microglia function in the nervous system. Required for activation of latent TGF-beta-1 in macrophages and microglia: associates specifically via disulfide bonds with the Latency-associated peptide (LAP), which is the regulatory chain of TGFB1, and regulates integrin-dependent activation of TGF-beta-1. TGF-beta-1 activation mediated by lrrc33/nrros is highly localized: there is little spreading of TGF-beta-1 activated from one microglial cell to neighboring microglia, suggesting the existence of localized and selective activation of TGF-beta-1 by lrrc33/nrros. This is Transforming growth factor beta activator LRRC33 from Danio rerio (Zebrafish).